Consider the following 925-residue polypeptide: Coronin-7 (925 aa).

WD repeat units lie at residues 75–115, 124–163, 166–205, and 209–253; these read CHSD…QALP, PEDLPVEVLQFHPTSDGILVSAAGTTVKVWDAAKQQPLTE, AHGDLVQSAVWSRDGALVGTACKDKQLRIFDPRTKPQASQ, and AHEN…SALA. Disordered stretches follow at residues 196–216 and 399–465; these read DPRTKPQASQSTQAHENSRDS and LVPP…SLQS. Over residues 201 to 210 the composition is skewed to polar residues; sequence PQASQSTQAH. Positions 429 to 460 are enriched in low complexity; that stretch reads SSPPSSLTSPSTPSSLGPTLSSTSGIGTGPSL. 2 positions are modified to phosphoserine: S462 and S465. K472 is covalently cross-linked (Glycyl lysine isopeptide (Lys-Gly) (interchain with G-Cter in ubiquitin)). WD repeat units follow at residues 542 to 582, 592 to 632, and 635 to 674; these read QNGA…LEEV, GHME…DRLK, and GHQDQIFSLAWSPDGQQLATVCKDGRVRVYRPRSGPEPLQ. A Glycyl lysine isopeptide (Lys-Gly) (interchain with G-Cter in ubiquitin) cross-link involves residue K680. The WD 8 repeat unit spans residues 728 to 768; sequence DVAPSTLVPSYEPRHWPGAPDWQGDARVFLYELLPESPFFM. The tract at residues 857–925 is disordered; that stretch reads LQPPDMSPVS…FEGVDEDEWD (69 aa). The span at 866–882 shows a compositional bias: low complexity; the sequence is SQAPREAPARRAPSSAQ. Basic and acidic residues predominate over residues 884 to 896; it reads LEEKSDQQKKEEL. S915 carries the phosphoserine modification.

This sequence belongs to the WD repeat coronin family. Interacts with clathrin adapter AP1 complex. This interaction takes place at Golgi membranes and not AP1-positive endosomal membranes. Interacts (when ubiquitinated at Lys-472) with EPS15. The membrane-associated form is phosphorylated on tyrosine residues. Post-translationally, ubiquitinated via 'Lys-33'-linked ubiquitin chains by the BCR(KLHL20) E3 ubiquitin ligase complex: 'Lys-33'-linked ubiquitination promotes interaction with EPS15 and facilitates actin polymerization at the trans-Golgi network, thereby facilitating post-Golgi trafficking. Deubiquitinated by ZRANB1/TRABID.

It is found in the golgi apparatus membrane. It localises to the golgi apparatus. Its subcellular location is the trans-Golgi network. The protein localises to the cytoplasmic vesicle. The protein resides in the cytoplasm. It is found in the cytosol. Its function is as follows. F-actin regulator involved in anterograde Golgi to endosome transport: upon ubiquitination via 'Lys-33'-linked ubiquitin chains by the BCR(KLHL20) E3 ubiquitin ligase complex, interacts with EPS15 and localizes to the trans-Golgi network, where it promotes actin polymerization, thereby facilitating post-Golgi trafficking. May play a role in the maintenance of the Golgi apparatus morphology. The sequence is that of Coronin-7 (CORO7) from Pongo abelii (Sumatran orangutan).